Consider the following 809-residue polypeptide: Phenylalanine--tRNA ligase beta subunit (809 aa).

The tRNA-binding domain maps to 39 to 152; sequence KDKWPNVYVG…ADALVGMLAS (114 aa). A B5 domain is found at 404 to 492; the sequence is KERNGIVLSL…RIAGYHTIPC (89 aa). Asp-470, Asp-476, Glu-479, and Glu-480 together coordinate Mg(2+). Positions 717-808 constitute an FDX-ACB domain; that stretch reads NRFPAVERDL…LNTETGAVLR (92 aa).

Belongs to the phenylalanyl-tRNA synthetase beta subunit family. Type 1 subfamily. As to quaternary structure, tetramer of two alpha and two beta subunits. Mg(2+) is required as a cofactor.

It is found in the cytoplasm. It catalyses the reaction tRNA(Phe) + L-phenylalanine + ATP = L-phenylalanyl-tRNA(Phe) + AMP + diphosphate + H(+). In Dehalococcoides mccartyi (strain CBDB1), this protein is Phenylalanine--tRNA ligase beta subunit.